The chain runs to 615 residues: Chaperone protein HtpG (615 aa).

The interval 1-335 (MSAEKQTHGF…APDLPLNVSR (335 aa)) is a; substrate-binding. The interval 336-541 (ELLQDYGPVQ…EDQLGPQMRR (206 aa)) is b. The c stretch occupies residues 542-615 (MLEAAGQPVP…RMQALLSQSV (74 aa)).

Belongs to the heat shock protein 90 family. As to quaternary structure, homodimer.

It is found in the cytoplasm. In terms of biological role, molecular chaperone. Has ATPase activity. This Alcanivorax borkumensis (strain ATCC 700651 / DSM 11573 / NCIMB 13689 / SK2) protein is Chaperone protein HtpG.